The sequence spans 182 residues: Dihydrofolate reductase (182 aa).

In terms of domain architecture, DHFR spans 3–180 (RFNLIVAVCE…IKFEYKILEK (178 aa)). NADP(+)-binding positions include Ala9 and 15–21 (GIGIRGD). 29-34 (ELKYFS) contacts substrate. 53–55 (RKT) contributes to the NADP(+) binding site. Substrate is bound at residue Arg69. NADP(+)-binding positions include 75–77 (STT) and 113–120 (GGSGVYEE).

This sequence belongs to the dihydrofolate reductase family. In terms of assembly, monomer. Interacts with vg.

It carries out the reaction (6S)-5,6,7,8-tetrahydrofolate + NADP(+) = 7,8-dihydrofolate + NADPH + H(+). It functions in the pathway cofactor biosynthesis; tetrahydrofolate biosynthesis; 5,6,7,8-tetrahydrofolate from 7,8-dihydrofolate: step 1/1. Its function is as follows. By interacting with vestigial (vg), may control genes involved in DNA replication. Key enzyme in folate metabolism. Catalyzes an essential reaction for de novo glycine and purine synthesis, and for DNA precursor synthesis. In Drosophila melanogaster (Fruit fly), this protein is Dihydrofolate reductase (Dhfr).